A 512-amino-acid chain; its full sequence is Methionine--tRNA ligase (512 aa).

The short motif at 11-21 is the 'HIGH' region element; that stretch reads YYASGKPHIGH. 4 residues coordinate Zn(2+): cysteine 126, cysteine 129, cysteine 143, and histidine 147. The short motif at 301 to 305 is the 'KMSKS' region element; it reads KMSKS. Lysine 304 is a binding site for ATP.

The protein belongs to the class-I aminoacyl-tRNA synthetase family. MetG type 2A subfamily. Monomer. It depends on Zn(2+) as a cofactor.

It is found in the cytoplasm. It carries out the reaction tRNA(Met) + L-methionine + ATP = L-methionyl-tRNA(Met) + AMP + diphosphate. Is required not only for elongation of protein synthesis but also for the initiation of all mRNA translation through initiator tRNA(fMet) aminoacylation. The protein is Methionine--tRNA ligase (metG) of Mycoplasma pneumoniae (strain ATCC 29342 / M129 / Subtype 1) (Mycoplasmoides pneumoniae).